Consider the following 323-residue polypeptide: Cell division protein ZipA (323 aa).

Over 1 to 4 the chain is Periplasmic; sequence MDLN. The helical transmembrane segment at 5–25 threads the bilayer; that stretch reads TILIILGIIALIILVVHGLWA. The Cytoplasmic portion of the chain corresponds to 26–323; it reads NRREKSQYFK…AEKAYLDKVR (298 aa). The disordered stretch occupies residues 44–73; the sequence is SRLREPPAHIQSASEEKKDANTSTPTAEVS.

Belongs to the ZipA family. As to quaternary structure, interacts with FtsZ via their C-terminal domains.

The protein localises to the cell inner membrane. Its function is as follows. Essential cell division protein that stabilizes the FtsZ protofilaments by cross-linking them and that serves as a cytoplasmic membrane anchor for the Z ring. Also required for the recruitment to the septal ring of downstream cell division proteins. This chain is Cell division protein ZipA, found in Pasteurella multocida (strain Pm70).